The chain runs to 128 residues: Serum amyloid A-4 protein (128 aa).

The signal sequence occupies residues methionine 1–serine 18. Residues serine 93 to tyrosine 128 are disordered. The span at aspartate 99–arginine 120 shows a compositional bias: basic and acidic residues.

This sequence belongs to the SAA family. As to quaternary structure, apolipoprotein of the HDL complex.

The protein localises to the secreted. Its function is as follows. Major acute phase reactant. The sequence is that of Serum amyloid A-4 protein from Sus scrofa (Pig).